The chain runs to 209 residues: Uracil phosphoribosyltransferase (209 aa).

5-phospho-alpha-D-ribose 1-diphosphate is bound by residues Arg79, Arg104, and 131–139 (DPMLATGGS). Residues Ile194 and 199 to 201 (GDA) contribute to the uracil site. Asp200 serves as a coordination point for 5-phospho-alpha-D-ribose 1-diphosphate.

It belongs to the UPRTase family. It depends on Mg(2+) as a cofactor.

The catalysed reaction is UMP + diphosphate = 5-phospho-alpha-D-ribose 1-diphosphate + uracil. The protein operates within pyrimidine metabolism; UMP biosynthesis via salvage pathway; UMP from uracil: step 1/1. With respect to regulation, allosterically activated by GTP. Functionally, catalyzes the conversion of uracil and 5-phospho-alpha-D-ribose 1-diphosphate (PRPP) to UMP and diphosphate. The chain is Uracil phosphoribosyltransferase from Bacillus velezensis (strain DSM 23117 / BGSC 10A6 / LMG 26770 / FZB42) (Bacillus amyloliquefaciens subsp. plantarum).